Consider the following 202-residue polypeptide: Matrix protein (202 aa).

Positions 1-33 (MNILRKIVKNRKDEDTQKPSPASAPPDDDDLWL) are disordered. Residues 35 to 38 (PPEY) carry the PPXY motif motif. The tract at residues 115–151 (KLRRTLIFQWADSRGPLEGEELEHSQEITWDDDTEFV) is essential for glycoprotein binding.

This sequence belongs to the lyssavirus matrix protein family. In terms of assembly, homomultimer. Interacts with nucleoprotein and with the cytoplasmic domain of glycoprotein. Interacts with host ATP6V1A; this interaction plays an important role in virion uncoating after viral entry.

The protein resides in the virion membrane. It is found in the host endomembrane system. Its subcellular location is the host cytoplasm. Its function is as follows. Plays a major role in assembly, budding and uncoating of virion after membrane fusion. Completely covers the ribonucleoprotein coil and keep it in condensed bullet-shaped form. Inhibits viral transcription and stimulates replication. Plays a major role in early induction of TRAIL-mediated apoptosis in infected neurons. Inhibits the integrated stress response (ISR) in the infected cell by blocking the formation of stress granules. The chain is Matrix protein (M) from Homo sapiens (Human).